We begin with the raw amino-acid sequence, 367 residues long: Ganglioside-induced differentiation-associated protein 1-like 1 (367 aa).

One can recognise a GST N-terminal domain in the interval 45-126; sequence ESLVLYHWTQ…YVERTFTGEH (82 aa). One can recognise a GST C-terminal domain in the interval 174-341; it reads PKYATAEIRR…RLVKRKPPSF (168 aa).

The protein belongs to the GST superfamily.

In Homo sapiens (Human), this protein is Ganglioside-induced differentiation-associated protein 1-like 1 (GDAP1L1).